The primary structure comprises 120 residues: Ribonuclease P protein component (120 aa).

This sequence belongs to the RnpA family. Consists of a catalytic RNA component (M1 or rnpB) and a protein subunit.

It carries out the reaction Endonucleolytic cleavage of RNA, removing 5'-extranucleotides from tRNA precursor.. In terms of biological role, RNaseP catalyzes the removal of the 5'-leader sequence from pre-tRNA to produce the mature 5'-terminus. It can also cleave other RNA substrates such as 4.5S RNA. The protein component plays an auxiliary but essential role in vivo by binding to the 5'-leader sequence and broadening the substrate specificity of the ribozyme. The polypeptide is Ribonuclease P protein component (Chelativorans sp. (strain BNC1)).